Consider the following 339-residue polypeptide: NADH-quinone oxidoreductase subunit H (339 aa).

Transmembrane regions (helical) follow at residues 19-39 (LLKI…LTLA), 87-107 (FLLG…VVPF), 120-140 (LLYI…AGWA), 153-173 (SAAQ…GVLM), 191-211 (FWEW…ISAV), 253-273 (ILVA…PVPF), 275-295 (PDSI…FLWF), and 310-330 (LGWK…GAMM).

It belongs to the complex I subunit 1 family. In terms of assembly, NDH-1 is composed of 14 different subunits. Subunits NuoA, H, J, K, L, M, N constitute the membrane sector of the complex.

The protein localises to the cell inner membrane. It carries out the reaction a quinone + NADH + 5 H(+)(in) = a quinol + NAD(+) + 4 H(+)(out). Its function is as follows. NDH-1 shuttles electrons from NADH, via FMN and iron-sulfur (Fe-S) centers, to quinones in the respiratory chain. The immediate electron acceptor for the enzyme in this species is believed to be ubiquinone. Couples the redox reaction to proton translocation (for every two electrons transferred, four hydrogen ions are translocated across the cytoplasmic membrane), and thus conserves the redox energy in a proton gradient. This subunit may bind ubiquinone. The polypeptide is NADH-quinone oxidoreductase subunit H (Methylobacillus flagellatus (strain ATCC 51484 / DSM 6875 / VKM B-1610 / KT)).